A 362-amino-acid chain; its full sequence is 11-beta-hydroxysteroid dehydrogenase B (362 aa).

Residues phenylalanine 10–isoleucine 30 traverse the membrane as a helical; Signal-anchor for type II membrane protein segment. A Proline-knob motif is present at residues proline 13–threonine 26. Glycine 55–arginine 81 is an NADP(+) binding site. Serine 185 is a substrate binding site. Residue tyrosine 198 is the Proton acceptor of the active site. Residues tyrosine 198–lysine 202 and lysine 202 contribute to the NADP(+) site. The disordered stretch occupies residues threonine 321–glutamate 362.

The protein belongs to the short-chain dehydrogenases/reductases (SDR) family. As to expression, expressed in seeds (at protein level). Not expressed in stem, leaf or root (at protein level).

The protein resides in the lipid droplet. It localises to the membrane. The enzyme catalyses an 11beta-hydroxysteroid + NADP(+) = an 11-oxosteroid + NADPH + H(+). It catalyses the reaction corticosterone + NADP(+) = 11-dehydrocorticosterone + NADPH + H(+). The catalysed reaction is 17beta-estradiol + NADP(+) = estrone + NADPH + H(+). Functionally, has dehydrogenase activity against corticosterone (11 beta-hydroxysteroid) and estradiol (17 beta-hydroxysteroid), with similar activities to both sterols in the presence of NADP(+), but negligible activity to either sterol in the presence of NAD(+). May be involved in signal transduction regulated by various sterols. This is 11-beta-hydroxysteroid dehydrogenase B from Sesamum indicum (Oriental sesame).